Here is a 204-residue protein sequence, read N- to C-terminus: FMN-dependent NADH:quinone oxidoreductase (204 aa).

FMN is bound by residues serine 10, 16–18, and 96–99; these read SIS and MYNF.

The protein belongs to the azoreductase type 1 family. In terms of assembly, homodimer. FMN serves as cofactor.

The enzyme catalyses 2 a quinone + NADH + H(+) = 2 a 1,4-benzosemiquinone + NAD(+). The catalysed reaction is N,N-dimethyl-1,4-phenylenediamine + anthranilate + 2 NAD(+) = 2-(4-dimethylaminophenyl)diazenylbenzoate + 2 NADH + 2 H(+). Quinone reductase that provides resistance to thiol-specific stress caused by electrophilic quinones. Functionally, also exhibits azoreductase activity. Catalyzes the reductive cleavage of the azo bond in aromatic azo compounds to the corresponding amines. The sequence is that of FMN-dependent NADH:quinone oxidoreductase from Herminiimonas arsenicoxydans.